The chain runs to 201 residues: Eukaryotic translation initiation factor 4E-5 (201 aa).

A disulfide bridge links cysteine 122 with cysteine 126.

Belongs to the eukaryotic initiation factor 4E family. As to quaternary structure, eIF4F is a multi-subunit complex, the composition of which varies with external and internal environmental conditions. It is composed of at least eIF4A, eIF4E and eIF4G. eIF4E is also known to interact with other partners. In terms of tissue distribution, enriched in the germline.

Recognizes and binds the 7-methylguanosine-containing mRNA cap during an early step in the initiation of protein synthesis and facilitates ribosome binding by inducing the unwinding of the mRNAs secondary structures. All 5 eIF4E proteins bind monomethyl cap structures. Only ife-1, ife-2 and ife-5 bind trimethyl cap structures which result from trans-splicing. Translation of trimethyl cap structure mRNAs may be regulated by intracellular redox state; disulfide bonds change the width and depth of the cap-binding cavity determining selectivity to mRNA caps. In Caenorhabditis elegans, this protein is Eukaryotic translation initiation factor 4E-5 (ife-5).